A 129-amino-acid polypeptide reads, in one-letter code: DNA base-flipping protein (129 aa).

It belongs to the MGMT family. ATL subfamily. Interacts with HelD and UvrA.

Functionally, involved in DNA damage recognition. Binds DNA containing O(6)-methylguanine and larger O(6)-alkylguanine adducts, and to double-stranded DNA that contains an AP (apurinic/apyrimidinic) site. Binds to the damaged base and flips the base out of the DNA duplex into an extrahelical conformation, which allows processing by repair proteins. Works in partnership with the nucleotide excision repair (NER) pathway to enhance the repair of the O(6)-alkylguanine adducts larger than the methyl adduct. Also prevents methyl-directed mismatch repair (MMR)-mediated attack of the O(6)-alkylguanine:T mispairs for the larger alkyl groups. This Escherichia coli (strain K12) protein is DNA base-flipping protein.